We begin with the raw amino-acid sequence, 664 residues long: Transketolase 1 (664 aa).

Residue His26 participates in substrate binding. Residues His66 and 114-116 (GPL) contribute to the thiamine diphosphate site. Residue Asp155 participates in Mg(2+) binding. Thiamine diphosphate contacts are provided by Gly156 and Asn185. Mg(2+)-binding residues include Asn185 and Ile187. His260, Arg357, and Ser384 together coordinate substrate. His260 contacts thiamine diphosphate. The active-site Proton donor is the Glu411. Phe437 contacts thiamine diphosphate. Positions 461, 469, and 520 each coordinate substrate.

Belongs to the transketolase family. As to quaternary structure, homodimer. Requires Mg(2+) as cofactor. Ca(2+) is required as a cofactor. The cofactor is Mn(2+). It depends on Co(2+) as a cofactor. Thiamine diphosphate serves as cofactor.

It catalyses the reaction D-sedoheptulose 7-phosphate + D-glyceraldehyde 3-phosphate = aldehydo-D-ribose 5-phosphate + D-xylulose 5-phosphate. In terms of biological role, catalyzes the transfer of a two-carbon ketol group from a ketose donor to an aldose acceptor, via a covalent intermediate with the cofactor thiamine pyrophosphate. This chain is Transketolase 1 (tkt1), found in Aliivibrio fischeri (strain ATCC 700601 / ES114) (Vibrio fischeri).